Reading from the N-terminus, the 456-residue chain is ATP synthase subunit beta 1 (456 aa).

An ATP-binding site is contributed by 152 to 159; sequence GGAGVGKS.

It belongs to the ATPase alpha/beta chains family. As to quaternary structure, F-type ATPases have 2 components, CF(1) - the catalytic core - and CF(0) - the membrane proton channel. CF(1) has five subunits: alpha(3), beta(3), gamma(1), delta(1), epsilon(1). CF(0) has three main subunits: a(1), b(2) and c(9-12). The alpha and beta chains form an alternating ring which encloses part of the gamma chain. CF(1) is attached to CF(0) by a central stalk formed by the gamma and epsilon chains, while a peripheral stalk is formed by the delta and b chains.

It is found in the cell membrane. It catalyses the reaction ATP + H2O + 4 H(+)(in) = ADP + phosphate + 5 H(+)(out). In terms of biological role, produces ATP from ADP in the presence of a proton gradient across the membrane. The catalytic sites are hosted primarily by the beta subunits. The polypeptide is ATP synthase subunit beta 1 (Listeria innocua serovar 6a (strain ATCC BAA-680 / CLIP 11262)).